The primary structure comprises 1517 residues: DNA-directed RNA polymerase subunit beta' (1517 aa).

Zn(2+) contacts are provided by cysteine 71, cysteine 73, cysteine 86, and cysteine 89. Residues aspartate 482, aspartate 484, and aspartate 486 each coordinate Mg(2+). Zn(2+) contacts are provided by cysteine 812, cysteine 886, cysteine 893, and cysteine 896.

It belongs to the RNA polymerase beta' chain family. The RNAP catalytic core consists of 2 alpha, 1 beta, 1 beta' and 1 omega subunit. When a sigma factor is associated with the core the holoenzyme is formed, which can initiate transcription. It depends on Mg(2+) as a cofactor. Zn(2+) serves as cofactor.

The catalysed reaction is RNA(n) + a ribonucleoside 5'-triphosphate = RNA(n+1) + diphosphate. DNA-dependent RNA polymerase catalyzes the transcription of DNA into RNA using the four ribonucleoside triphosphates as substrates. The chain is DNA-directed RNA polymerase subunit beta' from Campylobacter jejuni (strain RM1221).